A 340-amino-acid polypeptide reads, in one-letter code: tRNA N6-adenosine threonylcarbamoyltransferase (340 aa).

Histidine 111 and histidine 115 together coordinate Fe cation. Residues 134–138 (LVSGG), aspartate 167, glycine 180, and asparagine 276 each bind substrate. Residue aspartate 304 participates in Fe cation binding.

This sequence belongs to the KAE1 / TsaD family. Fe(2+) serves as cofactor.

The protein localises to the cytoplasm. It catalyses the reaction L-threonylcarbamoyladenylate + adenosine(37) in tRNA = N(6)-L-threonylcarbamoyladenosine(37) in tRNA + AMP + H(+). In terms of biological role, required for the formation of a threonylcarbamoyl group on adenosine at position 37 (t(6)A37) in tRNAs that read codons beginning with adenine. Is involved in the transfer of the threonylcarbamoyl moiety of threonylcarbamoyl-AMP (TC-AMP) to the N6 group of A37, together with TsaE and TsaB. TsaD likely plays a direct catalytic role in this reaction. This Helicobacter pylori (strain ATCC 700392 / 26695) (Campylobacter pylori) protein is tRNA N6-adenosine threonylcarbamoyltransferase.